An 86-amino-acid chain; its full sequence is High affinity immunoglobulin epsilon receptor subunit gamma (86 aa).

The signal sequence occupies residues 1–18 (MIPAVVLLLLLLVEQAAA). The Extracellular portion of the chain corresponds to 19 to 23 (LGEPQ). A helical transmembrane segment spans residues 24 to 44 (LCYILDAILFLYGIVLTLLYC). Residues 45 to 86 (RLKIQVRKAAIASYEKSDGVYTGLSTRNQETYETLKHEKPPQ) are Cytoplasmic-facing. In terms of domain architecture, ITAM spans 54–82 (AIASYEKSDGVYTGLSTRNQETYETLKHE). At Y65 the chain carries Phosphotyrosine. S69 is modified (phosphoserine). Y76 carries the phosphotyrosine modification. At T78 the chain carries Phosphothreonine.

It belongs to the CD3Z/FCER1G family. In terms of assembly, igE Fc receptor is a tetramer of an alpha chain, a beta chain, and two disulfide linked gamma chains. Associates with FCGR1A; forms a functional signaling complex. The signaling subunit of immunoglobulin gamma (IgG) Fc receptor complex. As a homodimer or a heterodimer of CD247 and FCER1G, associates with the ligand binding subunit FCGR3A to form a functional receptor complex. Associates with CLEC6A. Interacts with CLEC4E. Interacts (via ITAM domain) with SYK (via SH2 domains); activates SYK, enabling integrin-mediated activation of neutrophils and macrophages. Interacts with CSF2RB and recruits SYK in response to IL3 stimulation; this interaction is direct. Interacts with CD300LH; the interaction may be indirect. Interacts with CD300LD. Interacts with TARM1.

It localises to the cell membrane. In terms of biological role, adapter protein containing an immunoreceptor tyrosine-based activation motif (ITAM) that transduces activation signals from various immunoreceptors. As a component of the high-affinity immunoglobulin E (IgE) receptor, mediates allergic inflammatory signaling in mast cells. As a constitutive component of interleukin-3 receptor complex, selectively mediates interleukin 4/IL4 production by basophils priming T-cells toward effector T-helper 2 subset. Associates with pattern recognition receptors CLEC4D and CLEC4E to form a functional signaling complex in myeloid cells. Binding of mycobacterial trehalose 6,6'-dimycolate (TDM) to this receptor complex leads to phosphorylation of ITAM, triggering activation of SYK, CARD9 and NF-kappa-B, consequently driving maturation of antigen-presenting cells and shaping antigen-specific priming of T-cells toward effector T-helper 1 and T-helper 17 cell subtypes. May function cooperatively with other activating receptors. Functionally linked to integrin beta-2/ITGB2-mediated neutrophil activation. Also involved in integrin alpha-2/ITGA2-mediated platelet activation. The sequence is that of High affinity immunoglobulin epsilon receptor subunit gamma (FCER1G) from Macaca fascicularis (Crab-eating macaque).